The following is a 254-amino-acid chain: Hydroxyacylglutathione hydrolase (254 aa).

Zn(2+) contacts are provided by His-54, His-56, Asp-58, His-59, His-111, Asp-130, and His-168.

The protein belongs to the metallo-beta-lactamase superfamily. Glyoxalase II family. In terms of assembly, monomer. Zn(2+) serves as cofactor.

The enzyme catalyses an S-(2-hydroxyacyl)glutathione + H2O = a 2-hydroxy carboxylate + glutathione + H(+). It participates in secondary metabolite metabolism; methylglyoxal degradation; (R)-lactate from methylglyoxal: step 2/2. Thiolesterase that catalyzes the hydrolysis of S-D-lactoyl-glutathione to form glutathione and D-lactic acid. In Legionella pneumophila (strain Paris), this protein is Hydroxyacylglutathione hydrolase.